The following is a 244-amino-acid chain: Flagellar L-ring protein (244 aa).

Residues 1–18 (MNMRVFIFLIFAAASVSA) form the signal peptide. C19 carries N-palmitoyl cysteine lipidation. A lipid anchor (S-diacylglycerol cysteine) is attached at C19.

It belongs to the FlgH family. The basal body constitutes a major portion of the flagellar organelle and consists of four rings (L,P,S, and M) mounted on a central rod.

Its subcellular location is the cell outer membrane. The protein localises to the bacterial flagellum basal body. Functionally, assembles around the rod to form the L-ring and probably protects the motor/basal body from shearing forces during rotation. The polypeptide is Flagellar L-ring protein (Jannaschia sp. (strain CCS1)).